We begin with the raw amino-acid sequence, 457 residues long: ATP synthase subunit beta (457 aa).

An ATP-binding site is contributed by 147–154 (GGAGVGKT).

Belongs to the ATPase alpha/beta chains family. As to quaternary structure, F-type ATPases have 2 components, CF(1) - the catalytic core - and CF(0) - the membrane proton channel. CF(1) has five subunits: alpha(3), beta(3), gamma(1), delta(1), epsilon(1). CF(0) has three main subunits: a(1), b(2) and c(9-12). The alpha and beta chains form an alternating ring which encloses part of the gamma chain. CF(1) is attached to CF(0) by a central stalk formed by the gamma and epsilon chains, while a peripheral stalk is formed by the delta and b chains.

Its subcellular location is the cell inner membrane. The catalysed reaction is ATP + H2O + 4 H(+)(in) = ADP + phosphate + 5 H(+)(out). Functionally, produces ATP from ADP in the presence of a proton gradient across the membrane. The catalytic sites are hosted primarily by the beta subunits. This Haemophilus ducreyi (strain 35000HP / ATCC 700724) protein is ATP synthase subunit beta.